The chain runs to 742 residues: Photosystem I P700 chlorophyll a apoprotein A2 2 (742 aa).

8 consecutive transmembrane segments (helical) span residues 46 to 69, 135 to 158, 175 to 199, 273 to 291, 334 to 357, 373 to 399, 421 to 443, and 524 to 542; these read IFAT…FHVA, LYQG…LHLQ, LNHH…HVAI, MAHH…GHMY, LHFQ…QHMY, AALY…IFWV, AIIS…LYVH, and FLVH…LICV. 2 residues coordinate [4Fe-4S] cluster: Cys566 and Cys575. A run of 2 helical transmembrane segments spans residues 583-604 and 651-673; these read SFYL…YWHW and LSVW…MFLI. Chlorophyll a-binding residues include His662, Met670, and Tyr678. Trp679 contacts phylloquinone. Residues 715-735 form a helical membrane-spanning segment; the sequence is LVGLAHFTVGYILTYAAFLIA.

The protein belongs to the PsaA/PsaB family. As to quaternary structure, the PsaA/B heterodimer binds the P700 chlorophyll special pair and subsequent electron acceptors. PSI consists of a core antenna complex that captures photons, and an electron transfer chain that converts photonic excitation into a charge separation. The cyanobacterial PSI reaction center is composed of one copy each of PsaA,B,C,D,E,F,I,J,K,L,M and X, and forms trimeric complexes. PSI electron transfer chain: 5 chlorophyll a, 1 chlorophyll a', 2 phylloquinones and 3 4Fe-4S clusters. PSI core antenna: 90 chlorophyll a, 22 carotenoids, 3 phospholipids and 1 galactolipid. P700 is a chlorophyll a/chlorophyll a' dimer, A0 is one or more chlorophyll a, A1 is one or both phylloquinones and FX is a shared 4Fe-4S iron-sulfur center. serves as cofactor.

The protein localises to the cellular thylakoid membrane. It catalyses the reaction reduced [plastocyanin] + hnu + oxidized [2Fe-2S]-[ferredoxin] = oxidized [plastocyanin] + reduced [2Fe-2S]-[ferredoxin]. PsaA and PsaB bind P700, the primary electron donor of photosystem I (PSI), as well as the electron acceptors A0, A1 and FX. PSI is a plastocyanin/cytochrome c6-ferredoxin oxidoreductase, converting photonic excitation into a charge separation, which transfers an electron from the donor P700 chlorophyll pair to the spectroscopically characterized acceptors A0, A1, FX, FA and FB in turn. Oxidized P700 is reduced on the lumenal side of the thylakoid membrane by plastocyanin or cytochrome c6. This is Photosystem I P700 chlorophyll a apoprotein A2 2 from Trichormus variabilis (strain ATCC 29413 / PCC 7937) (Anabaena variabilis).